The following is a 324-amino-acid chain: Tyrosine--tRNA ligase (324 aa).

Position 36 (Tyr-36) interacts with L-tyrosine. The 'HIGH' region motif lies at 41 to 49; it reads PSGKVHLGH. L-tyrosine contacts are provided by Tyr-158, Gln-162, Asp-165, and Gln-180. The 'KMSKS' region motif lies at 215-219; it reads KMSSS. Ser-218 contributes to the ATP binding site.

Belongs to the class-I aminoacyl-tRNA synthetase family. TyrS type 3 subfamily. As to quaternary structure, homodimer.

It is found in the cytoplasm. The catalysed reaction is tRNA(Tyr) + L-tyrosine + ATP = L-tyrosyl-tRNA(Tyr) + AMP + diphosphate + H(+). In terms of biological role, catalyzes the attachment of tyrosine to tRNA(Tyr) in a two-step reaction: tyrosine is first activated by ATP to form Tyr-AMP and then transferred to the acceptor end of tRNA(Tyr). This chain is Tyrosine--tRNA ligase, found in Methanopyrus kandleri (strain AV19 / DSM 6324 / JCM 9639 / NBRC 100938).